The following is a 255-amino-acid chain: 4-hydroxy-tetrahydrodipicolinate reductase (255 aa).

Residues 9–14, 89–91, and 115–118 each bind NAD(+); these read GYRGKM, GTT, and APNF. Catalysis depends on His145, which acts as the Proton donor/acceptor. His146 serves as a coordination point for (S)-2,3,4,5-tetrahydrodipicolinate. Lys149 serves as the catalytic Proton donor. 155–156 lines the (S)-2,3,4,5-tetrahydrodipicolinate pocket; the sequence is GT.

It belongs to the DapB family.

It localises to the cytoplasm. It catalyses the reaction (S)-2,3,4,5-tetrahydrodipicolinate + NAD(+) + H2O = (2S,4S)-4-hydroxy-2,3,4,5-tetrahydrodipicolinate + NADH + H(+). The catalysed reaction is (S)-2,3,4,5-tetrahydrodipicolinate + NADP(+) + H2O = (2S,4S)-4-hydroxy-2,3,4,5-tetrahydrodipicolinate + NADPH + H(+). It functions in the pathway amino-acid biosynthesis; L-lysine biosynthesis via DAP pathway; (S)-tetrahydrodipicolinate from L-aspartate: step 4/4. In terms of biological role, catalyzes the conversion of 4-hydroxy-tetrahydrodipicolinate (HTPA) to tetrahydrodipicolinate. The sequence is that of 4-hydroxy-tetrahydrodipicolinate reductase from Streptococcus uberis (strain ATCC BAA-854 / 0140J).